The chain runs to 142 residues: Transcriptional regulator MraZ (142 aa).

2 SpoVT-AbrB domains span residues 5–51 (ASAL…PRPE) and 77–120 (AADV…DAAT).

The protein belongs to the MraZ family. In terms of assembly, forms oligomers.

The protein resides in the cytoplasm. Its subcellular location is the nucleoid. This is Transcriptional regulator MraZ from Ralstonia pickettii (strain 12J).